The chain runs to 159 residues: Ribosomal RNA large subunit methyltransferase H (159 aa).

S-adenosyl-L-methionine is bound by residues L76, G108, and F127–F132.

This sequence belongs to the RNA methyltransferase RlmH family. As to quaternary structure, homodimer.

It localises to the cytoplasm. The catalysed reaction is pseudouridine(1915) in 23S rRNA + S-adenosyl-L-methionine = N(3)-methylpseudouridine(1915) in 23S rRNA + S-adenosyl-L-homocysteine + H(+). Specifically methylates the pseudouridine at position 1915 (m3Psi1915) in 23S rRNA. The polypeptide is Ribosomal RNA large subunit methyltransferase H (Lachnoclostridium phytofermentans (strain ATCC 700394 / DSM 18823 / ISDg) (Clostridium phytofermentans)).